Reading from the N-terminus, the 275-residue chain is 2,3,4,5-tetrahydropyridine-2,6-dicarboxylate N-succinyltransferase (275 aa).

The protein belongs to the transferase hexapeptide repeat family.

It localises to the cytoplasm. It catalyses the reaction (S)-2,3,4,5-tetrahydrodipicolinate + succinyl-CoA + H2O = (S)-2-succinylamino-6-oxoheptanedioate + CoA. Its pathway is amino-acid biosynthesis; L-lysine biosynthesis via DAP pathway; LL-2,6-diaminopimelate from (S)-tetrahydrodipicolinate (succinylase route): step 1/3. The sequence is that of 2,3,4,5-tetrahydropyridine-2,6-dicarboxylate N-succinyltransferase from Paraburkholderia phymatum (strain DSM 17167 / CIP 108236 / LMG 21445 / STM815) (Burkholderia phymatum).